The chain runs to 458 residues: NADH-quinone oxidoreductase subunit N (458 aa).

Helical transmembrane passes span L2–L22, I30–S50, G62–I82, A93–I113, F118–F138, F153–F173, L196–L216, F235–I255, I261–A281, L290–N310, L319–F339, I361–F381, F397–V417, and L438–F458.

The protein belongs to the complex I subunit 2 family. As to quaternary structure, NDH-1 is composed of 14 different subunits. Subunits NuoA, H, J, K, L, M, N constitute the membrane sector of the complex.

It localises to the cell inner membrane. The enzyme catalyses a quinone + NADH + 5 H(+)(in) = a quinol + NAD(+) + 4 H(+)(out). In terms of biological role, NDH-1 shuttles electrons from NADH, via FMN and iron-sulfur (Fe-S) centers, to quinones in the respiratory chain. The immediate electron acceptor for the enzyme in this species is believed to be ubiquinone. Couples the redox reaction to proton translocation (for every two electrons transferred, four hydrogen ions are translocated across the cytoplasmic membrane), and thus conserves the redox energy in a proton gradient. The polypeptide is NADH-quinone oxidoreductase subunit N (Rickettsia typhi (strain ATCC VR-144 / Wilmington)).